Here is a 105-residue protein sequence, read N- to C-terminus: Small ribosomal subunit protein uS10 (105 aa).

It belongs to the universal ribosomal protein uS10 family. Part of the 30S ribosomal subunit.

In terms of biological role, involved in the binding of tRNA to the ribosomes. The chain is Small ribosomal subunit protein uS10 from Rickettsia prowazekii (strain Madrid E).